The sequence spans 330 residues: L-tryptophan isonitrile synthase AmbI2 (330 aa).

This sequence belongs to the isocyanide synthase family.

The enzyme catalyses D-ribulose 5-phosphate + L-tryptophan = (2S)-3-(1H-indol-3-yl)-2-isocyanopropanoate + hydroxyacetone + formaldehyde + phosphate + H2O + H(+). Its function is as follows. Involved in the biosynthesis of ambiguines, a family of hapalindole-type alkaloids. Responsible for the synthesis of the isonitrile group on tryptophan using ribulose 5-phosphate as the source of the carbon atom. This Fischerella ambigua (strain UTEX 1903) protein is L-tryptophan isonitrile synthase AmbI2.